Reading from the N-terminus, the 177-residue chain is MSRVANSPVTLPSGVDLTLNGQTVVVKGGKGSLEFNIHTSVQVSKEENVITFAARDGAKQSRALAGTTRALVNNMVVGVSQGFEKRLFLQGVGYRAALKGNVLNLSLGFSHPVDYELPEGVTAECASQTEIVIRGIDKQAVGQVAAEVRGFRPPEPYKGKGVRYSDEVIRRKEAKKK.

Belongs to the universal ribosomal protein uL6 family. In terms of assembly, part of the 50S ribosomal subunit.

Functionally, this protein binds to the 23S rRNA, and is important in its secondary structure. It is located near the subunit interface in the base of the L7/L12 stalk, and near the tRNA binding site of the peptidyltransferase center. In Marinomonas sp. (strain MWYL1), this protein is Large ribosomal subunit protein uL6.